We begin with the raw amino-acid sequence, 297 residues long: MATSENDKRSKPSSLRSIIAGSTAGAVEIAITYPAEFAKTRSQLNRRLPDAKKLPWPPFGSQWYAGCTTLIIGNSLKAGIRFVAFDWLKSLLQDENGQISGPKTVIAGFGAGFTESLLAVTPFESIKTQLIDDRKSQNPRMRGFLHGSRVIFQERGVRGFFQGFVPTTARQAANSATRFSSYTMLKQMAQGYVAPGEKLGTASTFALGGIAGLITVYVTQPLDTVKTSRMQSLEASKNYKNSFVCAARIFKDEGIFTFWSGAVPRLARLIMSGGIVFTMYEKTMDALDGLDPERRYI.

3 Solcar repeats span residues 12–91, 102–188, and 199–286; these read PSSL…LKSL, PKTV…LKQM, and LGTA…TMDA. 6 helical membrane passes run 18–31, 61–81, 99–119, 160–180, 192–212, and 251–272; these read IIAGSTAGAVEIAI, SQWYAGCTTLIIGNSLKAGIR, ISGPKTVIAGFGAGFTESLLA, FFQGFVPTTARQAANSATRFS, YVAPGEKLGTASTFALGGIAG, and KDEGIFTFWSGAVPRLARLIMS.

It belongs to the mitochondrial carrier (TC 2.A.29) family.

It is found in the mitochondrion inner membrane. It carries out the reaction citrate(in) + H(+)(in) = citrate(out) + H(+)(out). In terms of biological role, mitochondrial transporter that mediates citrate export from mitochondria to cytoplasm. Both ctpA, ctpB, and ctpD play important roles in citric acid transport across the mitochondrial membrane and function in a redundant manner. In Aspergillus niger (strain ATCC 1015 / CBS 113.46 / FGSC A1144 / LSHB Ac4 / NCTC 3858a / NRRL 328 / USDA 3528.7), this protein is Mitochondrial citrate transporter A.